Consider the following 261-residue polypeptide: Small ribosomal subunit protein eS4z (261 aa).

In terms of domain architecture, S4 RNA-binding spans 42–104 (LPLVLIIRNR…TNENFRLLYD (63 aa)).

This sequence belongs to the eukaryotic ribosomal protein eS4 family.

Its subcellular location is the cytoplasm. This Arabidopsis thaliana (Mouse-ear cress) protein is Small ribosomal subunit protein eS4z (RPS4A).